Here is a 351-residue protein sequence, read N- to C-terminus: Chorismate synthase (351 aa).

The disordered stretch occupies residues Glu39–Glu60. NADP(+) contacts are provided by Arg48 and Arg53. FMN is bound by residues Arg124–Ser126, Ala276, Lys291–Ser295, and Arg317.

The protein belongs to the chorismate synthase family. As to quaternary structure, homotetramer. The cofactor is FMNH2.

It catalyses the reaction 5-O-(1-carboxyvinyl)-3-phosphoshikimate = chorismate + phosphate. It functions in the pathway metabolic intermediate biosynthesis; chorismate biosynthesis; chorismate from D-erythrose 4-phosphate and phosphoenolpyruvate: step 7/7. In terms of biological role, catalyzes the anti-1,4-elimination of the C-3 phosphate and the C-6 proR hydrogen from 5-enolpyruvylshikimate-3-phosphate (EPSP) to yield chorismate, which is the branch point compound that serves as the starting substrate for the three terminal pathways of aromatic amino acid biosynthesis. This reaction introduces a second double bond into the aromatic ring system. The polypeptide is Chorismate synthase (Syntrophobacter fumaroxidans (strain DSM 10017 / MPOB)).